We begin with the raw amino-acid sequence, 869 residues long: Valine--tRNA ligase (869 aa).

Positions 47–57 (PYPTGNFHIGN) match the 'HIGH' region motif. The 'KMSKS' region motif lies at 521–525 (KMSKS). Lysine 524 contacts ATP.

Belongs to the class-I aminoacyl-tRNA synthetase family. ValS type 2 subfamily.

The protein localises to the cytoplasm. It carries out the reaction tRNA(Val) + L-valine + ATP = L-valyl-tRNA(Val) + AMP + diphosphate. Its function is as follows. Catalyzes the attachment of valine to tRNA(Val). As ValRS can inadvertently accommodate and process structurally similar amino acids such as threonine, to avoid such errors, it has a 'posttransfer' editing activity that hydrolyzes mischarged Thr-tRNA(Val) in a tRNA-dependent manner. The protein is Valine--tRNA ligase of Methanosarcina acetivorans (strain ATCC 35395 / DSM 2834 / JCM 12185 / C2A).